The sequence spans 459 residues: Cysteine desulfurase (459 aa).

Residues 1 to 17 (MVGSVAGNMLLRAAWRR) constitute a mitochondrion transit peptide. Pyridoxal 5'-phosphate-binding residues include Ala-129, Thr-130, Gln-237, Ser-257, and His-259. Position 260 is an N6-(pyridoxal phosphate)lysine (Lys-260). Thr-297 serves as a coordination point for pyridoxal 5'-phosphate. The active-site Cysteine persulfide intermediate is the Cys-383. [2Fe-2S] cluster is bound at residue Cys-383. Residue Cys-383 participates in Zn(2+) binding. Cys-383 carries the cysteine persulfide modification.

It belongs to the class-V pyridoxal-phosphate-dependent aminotransferase family. NifS/IscS subfamily. Homodimer. Component of the mitochondrial core iron-sulfur cluster (ISC) complex composed of NFS1, LYRM4, NDUFAB1, ISCU, FXN, and FDX2; this complex is a heterohexamer containing two copies of each monomer. Component of cyteine desulfurase complex composed of NFS1, LYRM4 and NDUFAB1; this complex contributes to the activation of cysteine desulfurase activity and NFS1 stabilization. Interacts (homodimer form) with ISCU (D-state); each monomer interacts with the C-terminal regions of each NFS1 monomer. Interacts with HSPA9. Interacts (via homodimer form) with FDX2. Interacts (via homodimer form) with FXN. Interacts with LYRM4. Component of a complex composed of FXN, NFS1, LYRM4 and ISCU. Pyridoxal 5'-phosphate serves as cofactor. Post-translationally, N-gluconoylated. In terms of processing, cysteine persulfide intermediate is reduced by thiol-containing molecules like glutathione and L-cysteine. Persulfide reduction is a rate-limiting step of cysteine desulfurase catalytic cycle. In terms of tissue distribution, ubiquitous.

The protein localises to the mitochondrion. It carries out the reaction (sulfur carrier)-H + L-cysteine = (sulfur carrier)-SH + L-alanine. The enzyme catalyses L-cysteinyl-[cysteine desulfurase] + L-cysteine = S-sulfanyl-L-cysteinyl-[cysteine desulfurase] + L-alanine. Its activity is regulated as follows. Active only in complex with LYRM4. In terms of biological role, mitochondrial cysteine desulfurase, of the core iron-sulfur cluster (ISC) assembly complex, that catalyzes the desulfuration of L-cysteine to L-alanine, as component of the cysteine desulfurase complex, leading to the formation of a cysteine persulfide intermediate at the active site cysteine residue and participates in the [2Fe-2S] clusters assembly on the scaffolding protein ISCU. The persulfide is then transferred on the flexible Cys loop from the catalytic site of NFS1 to the surface of NFS1. After the NFS1-linked persulfide sulfur is transferred to one of the conserved Cys residues of the scaffold, a reaction assisted by FXN. The core iron-sulfur cluster (ISC) assembly complex is involved in the de novo synthesis of a [2Fe-2S] cluster, the first step of the mitochondrial iron-sulfur protein biogenesis. This process is initiated by the cysteine desulfurase complex (NFS1:LYRM4:NDUFAB1) that produces persulfide which is delivered on the scaffold protein ISCU in a FXN-dependent manner. Then this complex is stabilized by FDX2 which provides reducing equivalents to accomplish the [2Fe-2S] cluster assembly. Finally, the [2Fe-2S] cluster is transferred from ISCU to chaperone proteins, including HSCB, HSPA9 and GLRX5. The polypeptide is Cysteine desulfurase (Mus musculus (Mouse)).